The primary structure comprises 406 residues: Tryptophan synthase beta chain (406 aa).

At K95 the chain carries N6-(pyridoxal phosphate)lysine.

Belongs to the TrpB family. As to quaternary structure, tetramer of two alpha and two beta chains. The cofactor is pyridoxal 5'-phosphate.

The enzyme catalyses (1S,2R)-1-C-(indol-3-yl)glycerol 3-phosphate + L-serine = D-glyceraldehyde 3-phosphate + L-tryptophan + H2O. It functions in the pathway amino-acid biosynthesis; L-tryptophan biosynthesis; L-tryptophan from chorismate: step 5/5. Functionally, the beta subunit is responsible for the synthesis of L-tryptophan from indole and L-serine. The protein is Tryptophan synthase beta chain of Azotobacter vinelandii (strain DJ / ATCC BAA-1303).